We begin with the raw amino-acid sequence, 122 residues long: MTTSSPTTTTIAKAHGRFIRGSVSKVRRVLDQIRGRTYRDALIMLEFMPYRSTGPITKVLRSAVANAEHNLGLDPASLVIAQASADMGPSMKRYRPRAQGRAFAIKKQTCHISIAVAAQTDS.

Belongs to the universal ribosomal protein uL22 family. Part of the 50S ribosomal subunit.

Functionally, this protein binds specifically to 23S rRNA; its binding is stimulated by other ribosomal proteins, e.g. L4, L17, and L20. It is important during the early stages of 50S assembly. It makes multiple contacts with different domains of the 23S rRNA in the assembled 50S subunit and ribosome. In terms of biological role, the globular domain of the protein is located near the polypeptide exit tunnel on the outside of the subunit, while an extended beta-hairpin is found that lines the wall of the exit tunnel in the center of the 70S ribosome. The protein is Large ribosomal subunit protein uL22 of Prochlorococcus marinus (strain MIT 9303).